The sequence spans 241 residues: Pyridoxine 5'-phosphate synthase (241 aa).

Residue Asn7 coordinates 3-amino-2-oxopropyl phosphate. Asp9 to His10 lines the 1-deoxy-D-xylulose 5-phosphate pocket. Arg18 serves as a coordination point for 3-amino-2-oxopropyl phosphate. His43 functions as the Proton acceptor in the catalytic mechanism. 1-deoxy-D-xylulose 5-phosphate is bound by residues Arg45 and His50. Glu70 acts as the Proton acceptor in catalysis. Thr100 contributes to the 1-deoxy-D-xylulose 5-phosphate binding site. Residue His191 is the Proton donor of the active site. 3-amino-2-oxopropyl phosphate contacts are provided by residues Ser192 and Gly213–His214.

Belongs to the PNP synthase family. As to quaternary structure, homooctamer; tetramer of dimers.

The protein localises to the cytoplasm. It carries out the reaction 3-amino-2-oxopropyl phosphate + 1-deoxy-D-xylulose 5-phosphate = pyridoxine 5'-phosphate + phosphate + 2 H2O + H(+). It participates in cofactor biosynthesis; pyridoxine 5'-phosphate biosynthesis; pyridoxine 5'-phosphate from D-erythrose 4-phosphate: step 5/5. Its function is as follows. Catalyzes the complicated ring closure reaction between the two acyclic compounds 1-deoxy-D-xylulose-5-phosphate (DXP) and 3-amino-2-oxopropyl phosphate (1-amino-acetone-3-phosphate or AAP) to form pyridoxine 5'-phosphate (PNP) and inorganic phosphate. The polypeptide is Pyridoxine 5'-phosphate synthase (Nitrosomonas eutropha (strain DSM 101675 / C91 / Nm57)).